Here is a 253-residue protein sequence, read N- to C-terminus: MSRTVSKLVINNLDLYYGEFHALKDVNLDIEEKEITAFIGPSGCGKSTLLKSINRMNDLVKNCKITGDITLEGEDVYRQLDINQLRKKVGMVFQKPNPFPMSIYDNVAFGPRTHGIHSKAELDDIVERSLKQAALWDEVKDRLHKSALGMSGGQQQRLCIARALAIEPDVLLMDEPTSALDPISTAKIEELVIQLKKNYTIVIVTHNMQQAVRISDKTAFFLMGEVVEYNKTSQLFSLPQDERTENYITGRFG.

The 241-residue stretch at 8 to 248 (LVINNLDLYY…PQDERTENYI (241 aa)) folds into the ABC transporter domain. Residue 40–47 (GPSGCGKS) coordinates ATP.

Belongs to the ABC transporter superfamily. Phosphate importer (TC 3.A.1.7) family. As to quaternary structure, the complex is composed of two ATP-binding proteins (PstB), two transmembrane proteins (PstC and PstA) and a solute-binding protein (PstS).

It is found in the cell membrane. It catalyses the reaction phosphate(out) + ATP + H2O = ADP + 2 phosphate(in) + H(+). Its function is as follows. Part of the ABC transporter complex PstSACB involved in phosphate import. Responsible for energy coupling to the transport system. The protein is Phosphate import ATP-binding protein PstB 3 of Streptococcus agalactiae serotype III (strain NEM316).